Here is a 562-residue protein sequence, read N- to C-terminus: Tripeptidyl-peptidase 1 (562 aa).

Residues 1-19 form the signal peptide; sequence MGLQARLLGLLALVIAGKC. The propeptide at 20-194 is removed in mature form; that stretch reads TYNPEPDQRW…PEPQQVGTVS (175 aa). Cys111 and Cys122 are disulfide-bonded. The region spanning 198-562 is the Peptidase S53 domain; the sequence is GVTPSVLRQR…PALLKTLLNP (365 aa). Asn209 carries N-linked (GlcNAc...) asparagine glycosylation. N-linked (GlcNAc...) (high mannose) asparagine glycosylation occurs at Asn221. Residues Glu271 and Asp275 each act as charge relay system in the active site. Asn285, Asn312, and Asn442 each carry an N-linked (GlcNAc...) asparagine glycan. 2 cysteine pairs are disulfide-bonded: Cys364–Cys525 and Cys521–Cys536. Ser474 (charge relay system) is an active-site residue. The Ca(2+) site is built by Asp516 and Val517. Gly538, Gly540, and Asp542 together coordinate Ca(2+).

Monomer. Interacts with CLN5. Interacts with CLN3. It depends on Ca(2+) as a cofactor. In terms of processing, activated by autocatalytic proteolytical processing upon acidification. N-glycosylation is required for processing and activity.

Its subcellular location is the lysosome. It is found in the melanosome. It catalyses the reaction Release of an N-terminal tripeptide from a polypeptide, but also has endopeptidase activity.. In terms of biological role, lysosomal serine protease with tripeptidyl-peptidase I activity. May act as a non-specific lysosomal peptidase which generates tripeptides from the breakdown products produced by lysosomal proteinases. Requires substrates with an unsubstituted N-terminus. The sequence is that of Tripeptidyl-peptidase 1 (Tpp1) from Mus musculus (Mouse).